The sequence spans 161 residues: Large ribosomal subunit protein uL15 (161 aa).

The disordered stretch occupies residues 1-57 (MRLKDAIPKKGSQQRGRRVGRGISAGQGASCGKGMRGQKSRSGGSTRPGFEGGQNPL). The span at 23–35 (ISAGQGASCGKGM) shows a compositional bias: gly residues.

This sequence belongs to the universal ribosomal protein uL15 family. In terms of assembly, part of the 50S ribosomal subunit.

Binds to the 23S rRNA. This Trichodesmium erythraeum (strain IMS101) protein is Large ribosomal subunit protein uL15.